We begin with the raw amino-acid sequence, 467 residues long: A-type ATP synthase subunit B (467 aa).

A disordered region spans residues 95 to 114; that stretch reads GKGQPRDHMPLPPPEDFRDV.

Belongs to the ATPase alpha/beta chains family. In terms of assembly, has multiple subunits with at least A(3), B(3), C, D, E, F, H, I and proteolipid K(x).

It is found in the cell membrane. Its function is as follows. Component of the A-type ATP synthase that produces ATP from ADP in the presence of a proton gradient across the membrane. The B chain is a regulatory subunit. This Pyrobaculum neutrophilum (strain DSM 2338 / JCM 9278 / NBRC 100436 / V24Sta) (Thermoproteus neutrophilus) protein is A-type ATP synthase subunit B.